The chain runs to 151 residues: UPF0208 membrane protein Spro_3315 (151 aa).

2 helical membrane-spanning segments follow: residues 46-64 (FAVR…WQIA) and 70-90 (GPAI…LWWL).

The protein belongs to the UPF0208 family.

Its subcellular location is the cell inner membrane. The sequence is that of UPF0208 membrane protein Spro_3315 from Serratia proteamaculans (strain 568).